Reading from the N-terminus, the 131-residue chain is Large-conductance mechanosensitive channel (131 aa).

2 helical membrane-spanning segments follow: residues 21 to 41 and 76 to 96; these read VGVI…ADVI and GMFI…FLMI.

It belongs to the MscL family. As to quaternary structure, homopentamer.

It is found in the cell inner membrane. In terms of biological role, channel that opens in response to stretch forces in the membrane lipid bilayer. May participate in the regulation of osmotic pressure changes within the cell. The protein is Large-conductance mechanosensitive channel of Histophilus somni (strain 129Pt) (Haemophilus somnus).